Consider the following 597-residue polypeptide: Formate--tetrahydrofolate ligase (597 aa).

Residue Thr84 to Ser91 participates in ATP binding.

Belongs to the formate--tetrahydrofolate ligase family.

The catalysed reaction is (6S)-5,6,7,8-tetrahydrofolate + formate + ATP = (6R)-10-formyltetrahydrofolate + ADP + phosphate. It participates in one-carbon metabolism; tetrahydrofolate interconversion. This is Formate--tetrahydrofolate ligase from Dehalococcoides mccartyi (strain CBDB1).